Here is a 35-residue protein sequence, read N- to C-terminus: Small toxic polypeptide LdrA (35 aa).

Residues 8 to 28 (MIFWHDLAAPILAGIITAAIV) traverse the membrane as a helical segment.

It belongs to the Ldr toxic peptide family.

The protein resides in the cell inner membrane. In terms of biological role, toxic component of a type I toxin-antitoxin (TA) system. Inhibits ATP synthesis possibly due to its insertion in the cell inner membrane, ATP levels drop over 50% 2 minutes after induction. Overexpression is toxic leading to cell death, it inhibits cell growth within 30 minutes; C-terminally tagged versions of the protein are toxic while N-terminally tagged versions are not. The protein is Small toxic polypeptide LdrA (ldrA) of Escherichia coli (strain K12).